Here is a 128-residue protein sequence, read N- to C-terminus: MTTSSYFLLVALGLLLYVCRSSFGSEHTCESDASPHPQGVCGSPLAEAVEAACELEQSLQGGTGKKRGRASLLRKRRAFLSMLKARAKRNEASPLQRSGRGIVCECCKNHCNIEELTEYCPPVTEGSG.

An N-terminal signal peptide occupies residues 1–24; it reads MTTSSYFLLVALGLLLYVCRSSFG. Disulfide bonds link Cys-29-Cys-104, Cys-41-Cys-107, Cys-53-Cys-120, and Cys-106-Cys-111. Residues 59–89 constitute a propeptide, c peptide; sequence LQGGTGKKRGRASLLRKRRAFLSMLKARAKR. At Glu-115 the chain carries 4-carboxyglutamate; partial. At Ser-127 the chain carries Serine amide.

This sequence belongs to the insulin family. In terms of assembly, heterodimer of A and B chains; disulfide-linked. In terms of tissue distribution, expressed by the venom gland.

Its subcellular location is the secreted. In terms of biological role, this venom insulin facilitates prey capture by rapidly inducing hypoglycemic shock. Intraperitoneal injection of this peptide into zebrafish lowers blood glucose with the same potency than human insulin. In vivo, when applied to water, this peptide reduces overall locomotor activity of zebrafish larvae, observed as a significant decrease in the percentage of time spent swimming and movement frequency. This Conus floridulus (Cone snail) protein is Con-Ins F2c.